The following is a 719-amino-acid chain: DNA replication licensing factor MCM7 (719 aa).

Ala-2 carries the N-acetylalanine modification. Glycyl lysine isopeptide (Lys-Gly) (interchain with G-Cter in SUMO2) cross-links involve residues Lys-15 and Lys-28. Position 314 is a phosphoserine (Ser-314). The region spanning 332–538 (FYEKLAASIA…NDLRLAQHIT (207 aa)) is the MCM domain. ATP is bound at residue Tyr-345. Position 365 is a phosphoserine (Ser-365). ATP-binding residues include Gly-384, Ala-386, Lys-387, Ser-388, and Asn-489. Ser-500 carries the phosphoserine modification. The short motif at 513–516 (SRFD) is the Arginine finger element. Position 514 (Arg-514) interacts with ATP. The interaction with RAD17 stretch occupies residues 521–564 (IQDRPDRDNDLRLAQHITYVHQHSRQPPAQFEPLDMKLMRRYIA). The interval 577–719 (LADYITAAYV…NTSRTRITFV (143 aa)) is interaction with ATRIP. Arg-604 is an ATP binding site. Ser-678 is subject to Phosphoserine.

The protein belongs to the MCM family. In terms of assembly, component of the MCM2-7 complex. The complex forms a toroidal hexameric ring with the proposed subunit order MCM2-MCM6-MCM4-MCM7-MCM3-MCM5. Component of the CMG helicase complex, a hexameric ring of related MCM2-7 subunits stabilized by CDC45 and the tetrameric GINS complex. Interacts with the ATR-ATRIP complex and with RAD17. Interacts with TIPIN. Interacts with MCMBP. Interacts with ANKRD17. Component of the replisome complex composed of at least DONSON, MCM2, MCM7, PCNA and TICRR. Post-translationally, O-glycosylated (O-GlcNAcylated), in a cell cycle-dependent manner. In terms of processing, ubiquitinated by ECS(LRR1) E3 ubiquitin-protein ligase complex when forks converge following formation of DNA interstrand cross-links. During mitosis, ubiquitinated by TRAIP when forks converge following formation of DNA interstrand cross-links. Short ubiquitin chains on MCM7 promote recruitment of DNA glycosylase NEIL3. If the interstrand cross-link cannot be cleaved by NEIL3, the ubiquitin chains continue to grow on MCM7, promoting the unloading of the CMG helicase complex by the VCP/p97 ATPase.

It localises to the nucleus. The protein localises to the chromosome. It catalyses the reaction ATP + H2O = ADP + phosphate + H(+). Functionally, acts as a component of the MCM2-7 complex (MCM complex) which is the replicative helicase essential for 'once per cell cycle' DNA replication initiation and elongation in eukaryotic cells. Core component of CDC45-MCM-GINS (CMG) helicase, the molecular machine that unwinds template DNA during replication, and around which the replisome is built. The active ATPase sites in the MCM2-7 ring are formed through the interaction surfaces of two neighboring subunits such that a critical structure of a conserved arginine finger motif is provided in trans relative to the ATP-binding site of the Walker A box of the adjacent subunit. The six ATPase active sites, however, are likely to contribute differentially to the complex helicase activity. Uncomplexed form does not show ATPase or DNA helicase. Required for S-phase checkpoint activation upon UV-induced damage. The chain is DNA replication licensing factor MCM7 (Mcm7) from Mus musculus (Mouse).